Here is a 424-residue protein sequence, read N- to C-terminus: Trigger factor (424 aa).

Residues 163 to 248 enclose the PPIase FKBP-type domain; sequence GDTVVLDFEG…IHEIKAKELP (86 aa).

The protein belongs to the FKBP-type PPIase family. Tig subfamily.

It localises to the cytoplasm. It catalyses the reaction [protein]-peptidylproline (omega=180) = [protein]-peptidylproline (omega=0). Involved in protein export. Acts as a chaperone by maintaining the newly synthesized protein in an open conformation. Functions as a peptidyl-prolyl cis-trans isomerase. This chain is Trigger factor, found in Bacillus licheniformis (strain ATCC 14580 / DSM 13 / JCM 2505 / CCUG 7422 / NBRC 12200 / NCIMB 9375 / NCTC 10341 / NRRL NRS-1264 / Gibson 46).